Consider the following 1260-residue polypeptide: Kinesin-like protein KIN-14E (1260 aa).

Positions 115-274 (FQKDPIPTSL…PGREEIEALL (160 aa)) constitute a MyTH4 domain. The 315-residue stretch at 279–593 (LTTIVFFLDE…HINDVMLRRY (315 aa)) folds into the FERM domain. 2 coiled-coil regions span residues 615–676 (QNFE…LLEV) and 753–853 (SKRL…TAAI). The region spanning 888–1209 (KIRVYCRIRP…LLYASRVRTI (322 aa)) is the Kinesin motor domain. An ATP-binding site is contributed by 972-977 (GSGKTF). Residues 1217 to 1239 (ISSKEMVRLKKLVAYWKEQAGKK) form a calmodulin-binding region. The segment at 1221 to 1260 (EMVRLKKLVAYWKEQAGKKGEEEDLVDIEEDRTRKDEADS) is homodimerization domain. The tract at residues 1236 to 1260 (AGKKGEEEDLVDIEEDRTRKDEADS) is disordered. Over residues 1251-1260 (DRTRKDEADS) the composition is skewed to basic and acidic residues.

It belongs to the TRAFAC class myosin-kinesin ATPase superfamily. Kinesin family. KIN-14 subfamily. As to quaternary structure, homodimer (via C-terminus). Binds microtubules via its N-terminus containing the MyTH4 domain and binds F-actin via its FERM domain. Interacts with KIPK1. Interacts with KIPK2. Interacts with AN. Interacts with AIR9. Interacts (via C-terminus) with KIC, CAM2, CAM4 and CAM6. KIC and calmodulin show competitive binding to KCBP. Binding to calmodulin inhibits microtubule binding activity. Binding to KIC inhibits microtubule binding activity and microtubule-stimulated ATPase activity. As to expression, widely expressed with the highest levels in flowers. Strongly expressed in the root tip. Highly detected in the branch apex of the trichome.

It localises to the cytoplasm. Its subcellular location is the cell cortex. The protein localises to the cytoskeleton. The protein resides in the spindle. It is found in the phragmoplast. In terms of biological role, minus-end microtubule-dependent motor protein involved in the regulation of cell division and trichome morphogenesis through microtubules bundling. Possesses basal and microtubule-stimulated ATPase activities. Acts as a hub that brings together microtubules and actin filaments to modulate the cytoskeleton during trichome formation and morphogenesis. Could be involved in the negative regulation of root growth. The protein is Kinesin-like protein KIN-14E of Arabidopsis thaliana (Mouse-ear cress).